A 174-amino-acid polypeptide reads, in one-letter code: Co-chaperone protein HscB homolog (174 aa).

Residues 2–74 (NYFELFSFTP…ILRAEHMLSL (73 aa)) enclose the J domain.

Belongs to the HscB family. In terms of assembly, interacts with HscA and stimulates its ATPase activity.

Functionally, co-chaperone involved in the maturation of iron-sulfur cluster-containing proteins. Seems to help targeting proteins to be folded toward HscA. This is Co-chaperone protein HscB homolog from Shewanella woodyi (strain ATCC 51908 / MS32).